A 404-amino-acid chain; its full sequence is Argininosuccinate synthase (404 aa).

Residues 11 to 19 and A40 each bind ATP; that span reads AYSGGLDTS. Residues Y92 and S97 each contribute to the L-citrulline site. G122 lines the ATP pocket. The L-aspartate site is built by T124, N128, and D129. Position 128 (N128) interacts with L-citrulline. Positions 132, 181, 190, 266, and 278 each coordinate L-citrulline.

This sequence belongs to the argininosuccinate synthase family. Type 1 subfamily. In terms of assembly, homotetramer.

It localises to the cytoplasm. The catalysed reaction is L-citrulline + L-aspartate + ATP = 2-(N(omega)-L-arginino)succinate + AMP + diphosphate + H(+). It participates in amino-acid biosynthesis; L-arginine biosynthesis; L-arginine from L-ornithine and carbamoyl phosphate: step 2/3. The chain is Argininosuccinate synthase from Moritella abyssi.